We begin with the raw amino-acid sequence, 77 residues long: Thioredoxin (77 aa).

Active-site nucleophile residues include Cys11 and Cys14. A disulfide bridge links Cys11 with Cys14.

The protein belongs to the glutaredoxin family.

Does not function as a glutathione-disulfide oxidoreductase in the presence of glutathione and glutathione reductase. Has low thioredoxin activity in vitro. The sequence is that of Thioredoxin from Methanothermobacter thermautotrophicus (strain ATCC 29096 / DSM 1053 / JCM 10044 / NBRC 100330 / Delta H) (Methanobacterium thermoautotrophicum).